We begin with the raw amino-acid sequence, 187 residues long: Biphenyl 2,3-dioxygenase subunit beta (187 aa).

This sequence belongs to the bacterial ring-hydroxylating dioxygenase beta subunit family. In terms of assembly, heterohexamer consisting of three BphA1 subunits and three BphA2 subunits. The multicomponent biphenyl dioxygenase system is composed of a ferredoxin reductase (BphA4), a ferredoxin (BphA3), and a terminal oxygenase (BphA1A2).

The enzyme catalyses biphenyl + NADH + O2 + H(+) = (2R,3S)-3-phenylcyclohexa-3,5-diene-1,2-diol + NAD(+). The protein operates within xenobiotic degradation; biphenyl degradation; 2-hydroxy-2,4-pentadienoate and benzoate from biphenyl: step 1/4. In terms of biological role, part of the oxygenase component of the biphenyl dioxygenase system that catalyzes the stereospecific dihydroxylation of the aromatic ring of biphenyl, yielding a dihydrodiol compound. Is likely involved in biphenyl degradation that allows growth of Rhodococcus sp. strain RHA1 on biphenyl as the sole source of carbon and energy. Can also use naphtalene and 4-chlorobiphenyl (4-CB) as substrates, as well as some polychlorinated biphenyls (PCB) such as 2,2'-dichlorobiphenyl, 2,3-dichlorobiphenyl and 2,5,2'-trichlorobiphenyl. Exhibits weak activity toward dibenzofuran and dibenzo-p-dioxin. Electrons are transferred from NADH to the [2Fe-2S] cluster in BphA1 via FAD of BphA4 and [2Fe-2S] cluster of BphA3. This Rhodococcus jostii (strain RHA1) protein is Biphenyl 2,3-dioxygenase subunit beta.